The following is a 198-amino-acid chain: Snake venom metalloproteinase neuwiedase (198 aa).

The Peptidase M12B domain occupies 8 to 198 (RYIELVIVAD…QTFLTNHNPQ (191 aa)). Ca(2+)-binding residues include Glu11 and Asp95. His144 contributes to the Zn(2+) binding site. Residue Glu145 is part of the active site. Positions 148 and 154 each coordinate Zn(2+). 2 disulfide bridges follow: Cys159–Cys183 and Cys161–Cys166.

It belongs to the venom metalloproteinase (M12B) family. P-I subfamily. Zn(2+) serves as cofactor. Expressed by the venom gland.

It is found in the secreted. Inhibited by EDTA, EGTA and 1,10-phenanthroline, partially inhibited by beta-mercaptoethanol and not inhibited by serine protease inhibitors (leupeptin and aprotinin). Also inhibited by an excess of zinc, mercury and magnesium ions. Extracts of the plant Casearia mariquitensis neutralizes the decrease of platelets and plasma fibrinogen induced by the protease. The same extracts also partially inhibit Bbeta chain cleavage, but not Aalpha chain cleavage. In terms of biological role, this metalloprotease hydrolyzes the Aalpha chain of fibrin and fibrinogen first followed by the Bbeta chain and shows no effect on the gamma chain. It is also able to degrade type I collagen, fibronectin, laminin and induces inflammatory reaction. It is devoid of hemorrhagic and thrombotic activities, except in lung where it induces pulmonary bleeding. It also induces a mild myotoxic reaction. It is not able to inhibit platelet aggregation, but it induces decrease of platelets and plasma fibrinogen. It contributes to local tissue damage by inducing edema, inflammatory infiltrate and mild myotoxicity, and by degrading extracellular matrix components. The chain is Snake venom metalloproteinase neuwiedase from Bothrops pauloensis (Neuwied's lancehead).